Reading from the N-terminus, the 470-residue chain is 5-hydroxytryptamine receptor 2A (470 aa).

Topologically, residues 1 to 80 (MDVLCEENTS…LQEKNWSALL (80 aa)) are extracellular. Asn-8, Asn-38, Asn-44, Asn-51, Asn-54, and Asn-75 each carry an N-linked (GlcNAc...) asparagine glycan. A helical transmembrane segment spans residues 81-97 (TAVVIILTIAGNILVIM). Residues 98–111 (AVSLEKKLQNATNY) lie on the Cytoplasmic side of the membrane. The chain crosses the membrane as a helical span at residues 112–137 (FLMSLAIADMLLGFLVMPVSMLTILY). Over 138–146 (GYRWPLPSK) the chain is Extracellular. A helical membrane pass occupies residues 147–171 (LCAVWIYLDVLFSTASIMHLCAISL). A disulfide bridge connects residues Cys-148 and Cys-227. Position 155 (Asp-155) interacts with serotonin. A DRY motif; important for ligand-induced conformation changes motif is present at residues 172-174 (DRY). At 172–191 (DRYVAIQNPIHHRRFNSRTK) the chain is on the cytoplasmic side. A helical membrane pass occupies residues 192-215 (AFLKIIAVWTISVGISMPIPVFGL). The Extracellular segment spans residues 216–232 (QDDSKVFKEGSCLLADD). The helical transmembrane segment at 233–258 (NFVLIGSFVSFFIPLTIMVITYFLTI) threads the bilayer. Residues 259–321 (KSLQKEATLC…QSISNEQKAC (63 aa)) are Cytoplasmic-facing. Ser-280 is subject to Phosphoserine. A helical membrane pass occupies residues 322–347 (KVLGIVFFLFVVMWCPFFITNIMAVI). Asn-342 contacts serotonin. Cys-348 and Cys-352 are oxidised to a cystine. The Extracellular portion of the chain corresponds to 348–355 (CKESCNED). The chain crosses the membrane as a helical span at residues 356-381 (VIGALLNVFVWIGYLSSAVNPLVYTL). The NPxxY motif; important for ligand-induced conformation changes and signaling motif lies at 375–379 (NPLVY). The Cytoplasmic segment spans residues 382-470 (FNKTYRSAFS…NTVNEKVSCV (89 aa)). A disordered region spans residues 448-470 (GKQHSEDAPADNSNTVNEKVSCV). A compositionally biased stretch (polar residues) spans 458 to 470 (DNSNTVNEKVSCV). A PDZ-binding motif is present at residues 468-470 (SCV).

The protein belongs to the G-protein coupled receptor 1 family. Interacts (via C-terminus) with MPDZ and PATJ. May interact (via C-terminus) with MPP3, PRDX6, DLG4, DLG1, CASK, APBA1 and MAGI2. Interacts with GRM2 and DRD2; this may affect signaling.

The protein resides in the cell membrane. The protein localises to the cell projection. Its subcellular location is the dendrite. It localises to the axon. It is found in the cytoplasmic vesicle. The protein resides in the membrane. The protein localises to the caveola. Its subcellular location is the presynapse. Its activity is regulated as follows. G-protein coupled receptor activity is regulated by lipids: oleamide increases HTR2A-mediated activity. Functionally, G-protein coupled receptor for 5-hydroxytryptamine (serotonin). Also functions as a receptor for various drugs and psychoactive substances, including mescaline, psilocybin, 1-(2,5-dimethoxy-4-iodophenyl)-2-aminopropane (DOI) and lysergic acid diethylamide (LSD). Ligand binding causes a conformation change that triggers signaling via guanine nucleotide-binding proteins (G proteins) and modulates the activity of downstream effectors. HTR2A is coupled to G(q)/G(11) G alpha proteins and activates phospholipase C-beta, releasing diacylglycerol (DAG) and inositol 1,4,5-trisphosphate (IP3) second messengers that modulate the activity of phosphatidylinositol 3-kinase and promote the release of Ca(2+) ions from intracellular stores, respectively. Beta-arrestin family members inhibit signaling via G proteins and mediate activation of alternative signaling pathways. Affects neural activity, perception, cognition and mood. Plays a role in the regulation of behavior, including responses to anxiogenic situations and psychoactive substances. Plays a role in intestinal smooth muscle contraction, and may play a role in arterial vasoconstriction. This chain is 5-hydroxytryptamine receptor 2A (HTR2A), found in Sus scrofa (Pig).